We begin with the raw amino-acid sequence, 353 residues long: Histidinol-phosphate aminotransferase (353 aa).

Residue Lys-209 is modified to N6-(pyridoxal phosphate)lysine.

The protein belongs to the class-II pyridoxal-phosphate-dependent aminotransferase family. Histidinol-phosphate aminotransferase subfamily. Homodimer. The cofactor is pyridoxal 5'-phosphate.

It carries out the reaction L-histidinol phosphate + 2-oxoglutarate = 3-(imidazol-4-yl)-2-oxopropyl phosphate + L-glutamate. Its pathway is amino-acid biosynthesis; L-histidine biosynthesis; L-histidine from 5-phospho-alpha-D-ribose 1-diphosphate: step 7/9. This chain is Histidinol-phosphate aminotransferase, found in Buchnera aphidicola subsp. Cinara cedri (strain Cc).